We begin with the raw amino-acid sequence, 493 residues long: Gamma-aminobutyric acid receptor subunit alpha-3 (493 aa).

The N-terminal stretch at 1 to 28 is a signal peptide; the sequence is MITTQMWHFYVTRVGLLLLISILPGTTG. Residues 27 to 54 are disordered; the sequence is TGQGESRRQEPGDFVKQDIGGLSPKHAP. The Extracellular segment spans residues 29-276; the sequence is QGESRRQEPG…THFHLKRKIG (248 aa). A compositionally biased stretch (basic and acidic residues) spans 31–42; that stretch reads ESRRQEPGDFVK. N-linked (GlcNAc...) asparagine glycosylation is present at asparagine 63. Arginine 119 contributes to the 4-aminobutanoate binding site. N-linked (GlcNAc...) asparagine glycosylation is found at asparagine 163 and asparagine 176. Threonine 182 is a binding site for 4-aminobutanoate. A disulfide bridge links cysteine 191 with cysteine 205. Asparagine 228 is a glycosylation site (N-linked (GlcNAc...) asparagine). 3 helical membrane passes run 277–298, 304–325, and 338–359; these read YFVIQTYLPCIMTVILSQVSFW, VPARTVFGVTTVLTMTTLSISA, and MDWFIAVCYAFVFSALIEFATV. The Cytoplasmic portion of the chain corresponds to 360–458; that stretch reads NYFTKRSWAW…TYNSVSKVDK (99 aa). The residue at position 427 (serine 427) is a Phosphoserine. Threonine 428 bears the Phosphothreonine mark. 2 positions are modified to phosphoserine: serine 434 and serine 443. The chain crosses the membrane as a helical span at residues 459 to 480; the sequence is ISRIIFPVLFAIFNLVYWATYV.

The protein belongs to the ligand-gated ion channel (TC 1.A.9) family. Gamma-aminobutyric acid receptor (TC 1.A.9.5) subfamily. GABRA3 sub-subfamily. Heteropentamer, formed by a combination of alpha (GABRA1-6), beta (GABRB1-3), gamma (GABRG1-3), delta (GABRD), epsilon (GABRE), rho (GABRR1-3), pi (GABRP) and theta (GABRQ) chains, each subunit exhibiting distinct physiological and pharmacological properties. Binds UBQLN1. Interacts with GPHN. As to expression, expressed in most brain regions. Expressed in lungs, in alveolar epithelium.

The protein resides in the postsynaptic cell membrane. It is found in the cell membrane. It catalyses the reaction chloride(in) = chloride(out). In terms of biological role, alpha subunit of the heteropentameric ligand-gated chloride channel gated by gamma-aminobutyric acid (GABA), a major inhibitory neurotransmitter in the brain. GABA-gated chloride channels, also named GABA(A) receptors (GABAAR), consist of five subunits arranged around a central pore and contain GABA active binding site(s) located at the alpha and beta subunit interface(s). When activated by GABA, GABAARs selectively allow the flow of chloride anions across the cell membrane down their electrochemical gradient. Chloride influx into the postsynaptic neuron following GABAAR opening decreases the neuron ability to generate a new action potential, thereby reducing nerve transmission. This chain is Gamma-aminobutyric acid receptor subunit alpha-3, found in Rattus norvegicus (Rat).